The primary structure comprises 908 residues: Transferrin-binding protein A (908 aa).

Positions 1–24 are cleaved as a signal peptide; it reads MQQQHLFRLNILCLSLMTALPVYA. The TonB box motif lies at 38 to 45; that stretch reads DTIQVKAK. The TBDR plug domain occupies 51–176; the sequence is RDNEVTGLGK…LAGSVAFQTK (126 aa). One can recognise a TBDR beta-barrel domain in the interval 187-908; it reads QWGIQSKTAY…NYTFSLEMKF (722 aa). Residues 891–908 carry the TonB C-terminal box motif; sequence NRYAAPGRNYTFSLEMKF.

It belongs to the TonB-dependent receptor family. In terms of assembly, binds both human apo- and holo-transferrin (TF), via the TF C-terminus. Forms a large complex with TF and TbpB.

The protein localises to the cell outer membrane. Functionally, neisseria acquires iron by extracting it from serum transferrin (TF) in its human host. Acts as a TF receptor and is required for TF utilization. Binds both apo- and holo-TF, via the TF C-terminus. The polypeptide is Transferrin-binding protein A (Neisseria meningitidis serogroup B).